Here is a 373-residue protein sequence, read N- to C-terminus: Stationary phase protein 5 (373 aa).

Its function is as follows. Required for survival at high temperature during stationary phase. The protein is Stationary phase protein 5 (SPG5) of Saccharomyces cerevisiae (strain ATCC 204508 / S288c) (Baker's yeast).